The following is a 272-amino-acid chain: NADPH-dependent aldehyde reductase 2, chloroplastic (272 aa).

The transit peptide at 1–53 (MAAASSVSSPPLCLAGRVAIVTGSSRGIGRAIAIHLAELGARVVVNYSTSPVE) directs the protein to the chloroplast. 26 to 50 (RGIGRAIAIHLAELGARVVVNYSTS) is a binding site for NADP(+). S165 contributes to the substrate binding site. The active-site Proton acceptor is the Y179.

It belongs to the short-chain dehydrogenases/reductases (SDR) family.

It localises to the plastid. Its subcellular location is the chloroplast. Functionally, aldehyde reductase that catalyzes the reduction of the aldehyde carbonyl groups on saturated and alpha,beta-unsaturated aldehydes with more than 5 carbons. No activity on alpha,beta-unsaturated ketones. Can use propionaldehyde, butyraldehyde, methylglyoxal, (e)-2-pentenal, (E)-2-hexenal, (Z)-3-hexenal and (E)-2-nonenal as substrates, but not propenal (acrolein), crotonaldehyde, 2-butanone, 3-buten-2-one or 1-penten-3-one. This is NADPH-dependent aldehyde reductase 2, chloroplastic from Arabidopsis thaliana (Mouse-ear cress).